A 316-amino-acid chain; its full sequence is L-lactate dehydrogenase (316 aa).

NAD(+)-binding positions include Met-14, 14-150, Ile-15, Asp-35, Tyr-67, Gly-81, Phe-82, Val-125, Asn-127, and Leu-150; that span reads MIGG…IIGL. Arg-95 contributes to the substrate binding site. The substrate site is built by Arg-158 and His-182. Residue His-182 is the Proton acceptor of the active site.

The protein belongs to the LDH/MDH superfamily. LDH family. In terms of assembly, homotetramer.

It catalyses the reaction (S)-lactate + NAD(+) = pyruvate + NADH + H(+). The protein operates within fermentation; pyruvate fermentation to lactate; (S)-lactate from pyruvate: step 1/1. This is L-lactate dehydrogenase from Plasmodium falciparum (isolate CDC / Honduras).